The sequence spans 383 residues: Fatty acid hydroxylase ahd1 (383 aa).

4 helical membrane-spanning segments follow: residues 84-104, 123-143, 172-192, and 214-236; these read VMGLTTHFVTITMAIVFNKSW, TVHTWILLSTCQLLVIGLFAL, LIPVVLFNLVVVNTISNIIYY, and VAQWLVCLLMEDIGFYTVHRALH. Positions 217 to 341 constitute a Fatty acid hydroxylase domain; sequence WLVCLLMEDI…VGLLDAIFKT (125 aa). The N-linked (GlcNAc...) asparagine glycan is linked to asparagine 342.

Belongs to the sterol desaturase family.

The protein localises to the membrane. Its pathway is secondary metabolite biosynthesis. Its function is as follows. Fatty acid hydroxylase; part of the gene cluster that mediates the biosynthesis of the glycolipid biosurfactant ustilagic acid (UA). UA is a secreted cellobiose glycolipid that is toxic for many microorganisms and confers biocontrol activity to U.maydis. UA consists of 15,16-dihydroxypalmitic or 2,15,16-trihydroxypalmitic acid, which is O-glycosidically linked to cellobiose at its terminal hydroxyl group. In addition, the cellobiose moiety is acetylated and acylated with a short-chain hydroxy fatty acid. UA biosynthesis starts with omega-hydroxylation of palmitic acid catalyzed by the cytochrome P450 monooxygenase cyp1. Terminal hydroxylation of palmitic acid precedes subterminal hydroxylation catalyzed by the cytochrome P450 monooxygenase cyp2. Sequential glucosylation of the hydroxy fatty acid is probably catalyzed by the glycosyltransferase ugt1. The cellobiose lipid is further decorated by acetylation of the proximal glucose residue and by acylation with a short-chain beta-hydroxy fatty acid at the distal glucose residue. The acyltransferase uat1 may be a good candidate for catalyzing either acetylation or acylation of the cellobiose lipid. The fatty acid synthase fas2 may be involved in synthesis of the carbon backbone of the short-chain beta-hydroxy fatty acid esterified to the cellobiose disaccharide. The secreted UA consists of a mixture of both alpha-hydroxylated and non-hydroxylated glycolipids; therefore, alpha-hydroxylation of the long-chain fatty, catalyzed by the fatty acid hydroxylase ahd1, occurs late in UA biosynthesis and may be the last step before secretion. In Mycosarcoma maydis (Corn smut fungus), this protein is Fatty acid hydroxylase ahd1.